Here is a 3075-residue protein sequence, read N- to C-terminus: Laminin subunit alpha-1 (3075 aa).

An N-terminal signal peptide occupies residues 1–17 (MRGGVLLVLLLCVAAQC). Positions 18-269 (RQRGLFPAIL…SIKDISVGGM (252 aa)) constitute a Laminin N-terminal domain. 16 cysteine pairs are disulfide-bonded: C270-C279, C272-C290, C292-C301, C304-C324, C327-C336, C329-C361, C364-C373, C376-C394, C397-C409, C399-C427, C429-C438, C441-C451, C454-C467, C456-C471, C473-C482, and C485-C500. 4 consecutive Laminin EGF-like domains span residues 270–326 (CICY…TCEA), 327–396 (CNCH…PCRP), 397–453 (CNCD…TCVS), and 454–502 (CGCN…GCSE). Residues 503–512 (CFCFGVSDVC) enclose the Laminin EGF-like 5; first part domain. A Laminin IV type A 1 domain is found at 516 to 708 (SWPVGQVNSM…DLVVAADVEH (193 aa)). An N-linked (GlcNAc...) asparagine glycan is attached at N665. The region spanning 709 to 741 (CECPQGYTGTSCESCLSGYYRVDGILFGGICQP) is the Laminin EGF-like 5; second part domain. 32 cysteine pairs are disulfide-bonded: C742–C751, C744–C757, C760–C769, C772–C788, C791–C806, C793–C816, C819–C828, C831–C846, C849–C863, C851–C870, C873–C882, C885–C899, C902–C914, C904–C921, C923–C932, C935–C948, C951–C963, C953–C969, C971–C980, C983–C995, C998–C1007, C1000–C1014, C1016–C1025, C1028–C1041, C1044–C1056, C1046–C1063, C1065–C1074, C1077–C1087, C1090–C1102, C1092–C1118, C1120–C1129, and C1132–C1147. Laminin EGF-like domains follow at residues 742 to 790 (CECH…DCQP), 791 to 848 (CACP…SCVP), 849 to 901 (CDCS…NCRA), 902 to 950 (CECH…GCRP), 951 to 997 (CNCS…SCTP), 998 to 1043 (CDCP…GCQA), 1044 to 1089 (CNCS…DCVP), and 1090 to 1149 (CDCD…GCSP). One can recognise a Laminin EGF-like 14; first part domain in the interval 1150 to 1159 (CFCSGLSHLC). A Laminin IV type A 2 domain is found at 1170-1361 (VTLGSDQPLL…EEEVASLLEN (192 aa)). The Laminin EGF-like 14; second part domain maps to 1362-1402 (CVCPPGTVGFSCQDCAPGYHRGKLPAGSDRGPRPLVAPCVP). 12 disulfides stabilise this stretch: C1403–C1412, C1405–C1419, C1422–C1431, C1434–C1449, C1452–C1466, C1454–C1476, C1479–C1488, C1491–C1506, C1509–C1521, C1511–C1528, C1530–C1539, and C1542–C1553. 3 consecutive Laminin EGF-like domains span residues 1403–1451 (CSCN…DCAL), 1452–1508 (CACP…SCQK), and 1509–1555 (CDCN…DCVS). Residues 1556–2116 (CDDECVGVLL…SQARKQAASI (561 aa)) form a domain II and I region. N-linked (GlcNAc...) asparagine glycans are attached at residues N1579, N1689, N1717, N2047, and N2243. Residues 1706–1783 (MQIRDFTQLH…KMQESNHLLL (78 aa)) adopt a coiled-coil conformation. Laminin G-like domains are found at residues 2117–2297 (KVAV…CRGC), 2305–2481 (DPSF…RKGC), 2486–2673 (IRSV…LDTC), 2713–2885 (AHQF…VNRC), and 2890–3070 (QEGT…LHSC). Intrachain disulfides connect C2271–C2297 and C2457–C2481. The Cell attachment site motif lies at 2534–2536 (RGD). 3 cysteine pairs are disulfide-bonded: C2646-C2673, C2860-C2885, and C3039-C3070.

In terms of assembly, laminin is a complex glycoprotein, consisting of three different polypeptide chains (alpha, beta, gamma), which are bound to each other by disulfide bonds into a cross-shaped molecule comprising one long and three short arms with globules at each end. Alpha-1 is a subunit of laminin-1 (laminin-111 or EHS laminin) and laminin-3 (laminin-121 or S-laminin). In terms of processing, tyrosine phosphorylated by PKDCC/VLK.

The protein resides in the secreted. Its subcellular location is the extracellular space. It localises to the extracellular matrix. The protein localises to the basement membrane. Functionally, binding to cells via a high affinity receptor, laminin is thought to mediate the attachment, migration and organization of cells into tissues during embryonic development by interacting with other extracellular matrix components. In Homo sapiens (Human), this protein is Laminin subunit alpha-1 (LAMA1).